Consider the following 448-residue polypeptide: Chromosomal replication initiator protein DnaA (448 aa).

Residues 1–73 (MNAQLKQLWT…INAIKLITSK (73 aa)) form a domain I, interacts with DnaA modulators region. A domain II region spans residues 73–109 (KKYNIEFSITSEEIFNNQQLKPKSSNDNIVVNDEMTS). The domain III, AAA+ region stretch occupies residues 110 to 326 (ILNPKYTFDS…GALIRIVAYS (217 aa)). ATP is bound by residues Gly154, Gly156, Lys157, and Thr158. Residues 327-448 (SLTNREISVD…DDLNKKITNN (122 aa)) are domain IV, binds dsDNA.

The protein belongs to the DnaA family. Oligomerizes as a right-handed, spiral filament on DNA at oriC.

The protein resides in the cytoplasm. Its function is as follows. Plays an essential role in the initiation and regulation of chromosomal replication. ATP-DnaA binds to the origin of replication (oriC) to initiate formation of the DNA replication initiation complex once per cell cycle. Binds the DnaA box (a 9 base pair repeat at the origin) and separates the double-stranded (ds)DNA. Forms a right-handed helical filament on oriC DNA; dsDNA binds to the exterior of the filament while single-stranded (ss)DNA is stabiized in the filament's interior. The ATP-DnaA-oriC complex binds and stabilizes one strand of the AT-rich DNA unwinding element (DUE), permitting loading of DNA polymerase. After initiation quickly degrades to an ADP-DnaA complex that is not apt for DNA replication. Binds acidic phospholipids. This is Chromosomal replication initiator protein DnaA from Clostridium novyi (strain NT).